The sequence spans 285 residues: VQ motif-containing protein 20 (285 aa).

Positions 1–10 (MSSTYKDNHP) are enriched in basic and acidic residues. Positions 1–68 (MSSTYKDNHP…PSPSSFSSAA (68 aa)) are disordered. Basic residues predominate over residues 11–23 (YHHHPHHHHHHPK). Residues 91 to 100 (FMALVQKLTG) carry the VQ motif. Residues 195–218 (YSAVAIPPQPPPHPPPPPPPPSMY) are disordered. The segment covering 201–216 (PPQPPPHPPPPPPPPS) has biased composition (pro residues).

Its subcellular location is the nucleus. Its function is as follows. May function as negative regulator of plant defense. The polypeptide is VQ motif-containing protein 20 (Arabidopsis thaliana (Mouse-ear cress)).